The sequence spans 2876 residues: Nipped-B-like protein B (2876 aa).

Polar residues-rich tracts occupy residues 124 to 142 and 149 to 167; these read PQNS…TTIT and YVQT…QNSP. Disordered regions lie at residues 124-197, 246-367, 439-494, and 525-1017; these read PQNS…PIQQ, NDEG…SDAE, RESA…AGNK, and EGPV…FPNY. Residues 276–290 show a composition bias toward pro residues; sequence GPRPPLILQSPPPYT. Over residues 439–457 the composition is skewed to basic and acidic residues; that stretch reads RESAIERERCSKEVQDKDK. The span at 471–480 shows a compositional bias: low complexity; that stretch reads PGAAGTAGAS. A compositionally biased stretch (gly residues) spans 481–490; the sequence is GTPGVGGGCN. 3 stretches are compositionally biased toward basic and acidic residues: residues 556–577, 586–955, and 962–1005; these read SKTD…KQRV, VDGR…EQRS, and VKQE…HKPQ. Residues 1068–1081 carry the PxVxL motif motif; that stretch reads NKGAKPVVVLKKLS. 2 disordered regions span residues 1088 to 1229 and 1724 to 1747; these read MISN…EPKL and TEKA…KDVE. A compositionally biased stretch (low complexity) spans 1090-1100; sequence SNSRSSKSSRS. Basic and acidic residues-rich tracts occupy residues 1104–1119 and 1156–1183; these read RFRE…ERVK and KDRD…DSRR. Residues 1212-1223 are compositionally biased toward basic residues; it reads KLKKKEKQKKRK. HEAT repeat units lie at residues 1803 to 1841, 1879 to 1917, 1981 to 2020, 2203 to 2241, and 2349 to 2387; these read AQSF…VDPS, PQLT…EQPT, YDWF…HILK, VVIK…QDPG, and LIHP…KYTG. Disordered stretches follow at residues 2516-2590 and 2728-2774; these read EVVK…DSDL and ALLG…GHRN. A compositionally biased stretch (basic residues) spans 2519–2537; it reads KKKKKKKKKKKQKQKRGKK. Residues 2548–2563 are compositionally biased toward low complexity; sequence RSSSSSSSSSSSSSDS. Over residues 2762–2774 the composition is skewed to basic and acidic residues; the sequence is RTGDSAEASGHRN.

The protein belongs to the SCC2/Nipped-B family.

It is found in the nucleus. Functionally, may play a structural role in chromatin. Involved in sister chromatid cohesion, possibly by facilitating the cohesin complex loading. Transcription factor, which may promote cortical neuron migration during brain development by regulating the transcription of crucial genes in this process. This is Nipped-B-like protein B (nipblb) from Danio rerio (Zebrafish).